The chain runs to 118 residues: Large ribosomal subunit protein uL24 (118 aa).

Belongs to the universal ribosomal protein uL24 family. As to quaternary structure, part of the 50S ribosomal subunit.

In terms of biological role, one of two assembly initiator proteins, it binds directly to the 5'-end of the 23S rRNA, where it nucleates assembly of the 50S subunit. Functionally, one of the proteins that surrounds the polypeptide exit tunnel on the outside of the subunit. In Parasynechococcus marenigrum (strain WH8102), this protein is Large ribosomal subunit protein uL24.